A 180-amino-acid polypeptide reads, in one-letter code: Bifunctional protein PyrR (180 aa).

Substrate is bound by residues 39-40, 103-111, and R136; these read TR and DDVLYTGRT. The short motif at 99-111 is the PRPP-binding element; the sequence is VILIDDVLYTGRT.

Belongs to the purine/pyrimidine phosphoribosyltransferase family. PyrR subfamily. Homodimer and homohexamer; in equilibrium.

It carries out the reaction UMP + diphosphate = 5-phospho-alpha-D-ribose 1-diphosphate + uracil. In terms of biological role, regulates transcriptional attenuation of the pyrimidine nucleotide (pyr) operon by binding in a uridine-dependent manner to specific sites on pyr mRNA. This disrupts an antiterminator hairpin in the RNA and favors formation of a downstream transcription terminator, leading to a reduced expression of downstream genes. Also displays a weak uracil phosphoribosyltransferase activity which is not physiologically significant. This is Bifunctional protein PyrR from Halalkalibacterium halodurans (strain ATCC BAA-125 / DSM 18197 / FERM 7344 / JCM 9153 / C-125) (Bacillus halodurans).